A 343-amino-acid chain; its full sequence is N-acetyl-gamma-glutamyl-phosphate reductase (343 aa).

The active site involves cysteine 147.

The protein belongs to the NAGSA dehydrogenase family. Type 1 subfamily.

It localises to the cytoplasm. The enzyme catalyses N-acetyl-L-glutamate 5-semialdehyde + phosphate + NADP(+) = N-acetyl-L-glutamyl 5-phosphate + NADPH + H(+). It participates in amino-acid biosynthesis; L-arginine biosynthesis; N(2)-acetyl-L-ornithine from L-glutamate: step 3/4. Functionally, catalyzes the NADPH-dependent reduction of N-acetyl-5-glutamyl phosphate to yield N-acetyl-L-glutamate 5-semialdehyde. This Listeria monocytogenes serotype 4b (strain F2365) protein is N-acetyl-gamma-glutamyl-phosphate reductase.